Here is a 100-residue protein sequence, read N- to C-terminus: Integration host factor subunit alpha (100 aa).

It belongs to the bacterial histone-like protein family. In terms of assembly, heterodimer of an alpha and a beta chain.

Its function is as follows. This protein is one of the two subunits of integration host factor, a specific DNA-binding protein that functions in genetic recombination as well as in transcriptional and translational control. The polypeptide is Integration host factor subunit alpha (Methylobacillus flagellatus (strain ATCC 51484 / DSM 6875 / VKM B-1610 / KT)).